The following is a 265-amino-acid chain: 4-hydroxy-tetrahydrodipicolinate reductase (265 aa).

Residues 7–12 (GASGRM) and Asp33 each bind NAD(+). Position 34 (Arg34) interacts with NADP(+). NAD(+) contacts are provided by residues 96 to 98 (GTT) and 120 to 123 (AANM). Catalysis depends on His153, which acts as the Proton donor/acceptor. His154 is a binding site for (S)-2,3,4,5-tetrahydrodipicolinate. Residue Lys157 is the Proton donor of the active site. Residue 163–164 (GT) coordinates (S)-2,3,4,5-tetrahydrodipicolinate.

This sequence belongs to the DapB family.

Its subcellular location is the cytoplasm. It catalyses the reaction (S)-2,3,4,5-tetrahydrodipicolinate + NAD(+) + H2O = (2S,4S)-4-hydroxy-2,3,4,5-tetrahydrodipicolinate + NADH + H(+). The enzyme catalyses (S)-2,3,4,5-tetrahydrodipicolinate + NADP(+) + H2O = (2S,4S)-4-hydroxy-2,3,4,5-tetrahydrodipicolinate + NADPH + H(+). The protein operates within amino-acid biosynthesis; L-lysine biosynthesis via DAP pathway; (S)-tetrahydrodipicolinate from L-aspartate: step 4/4. In terms of biological role, catalyzes the conversion of 4-hydroxy-tetrahydrodipicolinate (HTPA) to tetrahydrodipicolinate. This is 4-hydroxy-tetrahydrodipicolinate reductase from Burkholderia vietnamiensis (strain G4 / LMG 22486) (Burkholderia cepacia (strain R1808)).